Reading from the N-terminus, the 267-residue chain is MIKYPAFDPVAFTLGPLNIRWYGLMYILGFVAAWLLARSRALKTGSGWTVEQVDDLVTYSVFGVILGGRLGYTLFYETSYFLNNPLDIFKIWNGGMSFHGGLLGVIIAIWLFARHTGKSLFEVGDFTAPLVAPGLLAGRLGNFINGELWGRHTSAEWGMVFPGAGPLPRHPSQLYEAALEGVALFIILWLFSAKPRPRMAVSGMFLLLYGSFRFFVEFFREPDLHLGYLAFGWVTMGQILCLPMILGGLVLVGFAMKNEKQAALKTE.

7 consecutive transmembrane segments (helical) span residues 17 to 37 (LNIR…WLLA), 56 to 76 (LVTY…TLFY), 91 to 111 (IWNG…AIWL), 120 to 140 (LFEV…AGRL), 173 to 193 (QLYE…LFSA), 199 to 219 (MAVS…VEFF), and 236 to 256 (MGQI…GFAM). Arg-139 is a binding site for a 1,2-diacyl-sn-glycero-3-phospho-(1'-sn-glycerol).

The protein belongs to the Lgt family.

The protein resides in the cell inner membrane. The enzyme catalyses L-cysteinyl-[prolipoprotein] + a 1,2-diacyl-sn-glycero-3-phospho-(1'-sn-glycerol) = an S-1,2-diacyl-sn-glyceryl-L-cysteinyl-[prolipoprotein] + sn-glycerol 1-phosphate + H(+). It participates in protein modification; lipoprotein biosynthesis (diacylglyceryl transfer). Its function is as follows. Catalyzes the transfer of the diacylglyceryl group from phosphatidylglycerol to the sulfhydryl group of the N-terminal cysteine of a prolipoprotein, the first step in the formation of mature lipoproteins. The polypeptide is Phosphatidylglycerol--prolipoprotein diacylglyceryl transferase (Oleidesulfovibrio alaskensis (strain ATCC BAA-1058 / DSM 17464 / G20) (Desulfovibrio alaskensis)).